Consider the following 713-residue polypeptide: Subtilisin-like protease SBT4.9 (713 aa).

Positions 1 to 24 (MARRADSFCLISCVLVSFVISVSA) are cleaved as a signal peptide. The propeptide at 25-113 (VTDDSQDKQV…VFPDINYKLQ (89 aa)) is activation peptide. The 79-residue stretch at 34-112 (VYVVYMGSLP…SVFPDINYKL (79 aa)) folds into the Inhibitor I9 domain. The Peptidase S8 domain occupies 117-560 (SWDFLGLKEG…AGHVDPIAAI (444 aa)). D145 (charge relay system) is an active-site residue. A glycan (N-linked (GlcNAc...) asparagine) is linked at N176. Residue H200 is the Charge relay system of the active site. N-linked (GlcNAc...) asparagine glycosylation is found at N215 and N223. In terms of domain architecture, PA spans 356 to 415 (NYPLYGGSTDGPLLRGKILVSEDKVSSEIVVANINENYHDYAYVSILPSSALSKDDFDSV). N420 carries N-linked (GlcNAc...) asparagine glycosylation. The active-site Charge relay system is the S499. 4 N-linked (GlcNAc...) asparagine glycosylation sites follow: N536, N583, N627, and N637.

The protein belongs to the peptidase S8 family. The C-terminal propeptide is autocleaved.

It localises to the secreted. This chain is Subtilisin-like protease SBT4.9, found in Arabidopsis thaliana (Mouse-ear cress).